Reading from the N-terminus, the 283-residue chain is Pantothenate synthetase (283 aa).

Residue 30–37 (MGNLHDGH) coordinates ATP. H37 acts as the Proton donor in catalysis. Residue Q61 participates in (R)-pantoate binding. Q61 contributes to the beta-alanine binding site. 149–152 (GEKD) contacts ATP. Residue Q155 participates in (R)-pantoate binding. Residues M178 and 186–189 (LSSR) each bind ATP.

It belongs to the pantothenate synthetase family. Homodimer.

The protein resides in the cytoplasm. The catalysed reaction is (R)-pantoate + beta-alanine + ATP = (R)-pantothenate + AMP + diphosphate + H(+). It functions in the pathway cofactor biosynthesis; (R)-pantothenate biosynthesis; (R)-pantothenate from (R)-pantoate and beta-alanine: step 1/1. Activation requires a combination of a divalent cation, magnesium or manganese, and a monovalent cation, potassium or ammonium. Above the optimum concentration for activation, magnesium and manganese are rather inhibitory. Also activated by 2-mercaptoethanol, dithiothreitol, cysteine and glutathione. Inhibited by divalent cations (mercury, cobalt, zinc, copper, silver), chelating agents (EDTA, EGTA and o-phenanthroline), and analogs of beta-alanine (taurine, gamma-aminobutyrate, gamma-amino-beta-hydroxybutyrate). Catalyzes the condensation of pantoate with beta-alanine in an ATP-dependent reaction via a pantoyl-adenylate intermediate. The sequence is that of Pantothenate synthetase (panC) from Escherichia coli (strain K12).